We begin with the raw amino-acid sequence, 415 residues long: Multidrug resistance protein MdtA (415 aa).

The N-terminal stretch at 1–21 (MKGSYKSRWVIVIVVVIAAIA) is a signal peptide. 2 disordered regions span residues 32 to 60 (SRSAAPGATKQAQQSPASGRRGMRSGPLA) and 392 to 415 (EAQSATTPEEKATSREYAKKGARS). Residues 399 to 415 (PEEKATSREYAKKGARS) are compositionally biased toward basic and acidic residues.

It belongs to the membrane fusion protein (MFP) (TC 8.A.1) family. Part of a tripartite efflux system composed of MdtA, MdtB and MdtC.

It is found in the cell inner membrane. The MdtABC tripartite complex confers resistance against novobiocin and deoxycholate. In Escherichia coli O81 (strain ED1a), this protein is Multidrug resistance protein MdtA.